A 321-amino-acid chain; its full sequence is MRYEQPPGPGIGSTPILSVEGLRKRYGEQTVVDGLSFSVRRGQCFGLLGPNGAGKTTTLRMLLGMTMPDAGTLQLCGETIPGHAHRARMRVGVVPQFDNLDPDFTVSENLQIFGRYFGLPAATIRKRMPGLLEFARLEQKADAPVRALSGGMRRRLTVARSLINDPDVLVMDEPTTGLDPQARHLIWERLRSLLASGKTILLTTHFMEEAERLCDELCVIDNGRKIAQGKPHELITHEIGCDVVEVYGDDLPALRTLLAPLAERVEASGETLFCYARDPQPLVATLRSQTETHAMPGLRYLHRPANLEDVFLRLTGREMRD.

The ABC transporter domain maps to 17–247; sequence LSVEGLRKRY…EIGCDVVEVY (231 aa). Position 49–56 (49–56) interacts with ATP; sequence GPNGAGKT.

The protein belongs to the ABC transporter superfamily. Lipooligosaccharide exporter (TC 3.A.1.102) family. As to quaternary structure, the complex is composed of two ATP-binding proteins (NodI) and two transmembrane proteins (NodJ).

It localises to the cell inner membrane. Its function is as follows. Part of the ABC transporter complex NodIJ involved in the export of the nodulation factors (Nod factors), the bacterial signal molecules that induce symbiosis and subsequent nodulation induction. Nod factors are LCO (lipo-chitin oligosaccharide), a modified beta-1,4-linked N-acetylglucosamine oligosaccharide. This subunit is responsible for energy coupling to the transport system. This is Nod factor export ATP-binding protein I from Ralstonia nicotianae (strain ATCC BAA-1114 / GMI1000) (Ralstonia solanacearum).